Reading from the N-terminus, the 622-residue chain is Iron transport multicopper oxidase fetC (622 aa).

A signal peptide spans 1–20 (MARLVHLTAVLAASIRLAAA). The Extracellular portion of the chain corresponds to 21-552 (ATINHDFNVT…DPLPAGFTTR (532 aa)). N-linked (GlcNAc...) asparagine glycans are attached at residues N28 and N74. 2 consecutive Plastocyanin-like domains span residues 29-144 (VTWV…VHDP) and 154-301 (EEIV…SYDK). H80 and H82 together coordinate Cu cation. Residues N87 and N112 are each glycosylated (N-linked (GlcNAc...) asparagine). Positions 124 and 126 each coordinate Cu cation. N-linked (GlcNAc...) asparagine glycans are attached at residues N194, N198, N265, N292, and N358. The 136-residue stretch at 362–497 (KSPKVPTLYS…GLVATFVEAP (136 aa)) folds into the Plastocyanin-like 3 domain. Cu cation is bound by residues H412, H415, and H417. N-linked (GlcNAc...) asparagine glycosylation is present at N428. Residues H478, C479, H480, and H484 each contribute to the Cu cation site. A helical transmembrane segment spans residues 553–573 (GIVALVFSCVTGILGICVVAW). The Cytoplasmic portion of the chain corresponds to 574 to 622 (YGMSQPLEEATAAVATLVREAQVTGSGTSPNHDDGNAAATEAGVLRRRT). The interval 597–622 (TGSGTSPNHDDGNAAATEAGVLRRRT) is disordered.

Belongs to the multicopper oxidase family.

The protein resides in the cell membrane. Functionally, cell surface ferroxidase; part of the reductive iron assimilatory system (RIA), a siderophore-independent high affinity iron uptake mechanism. Required to oxidize Fe(2+) and release it from the transporter. The polypeptide is Iron transport multicopper oxidase fetC (Epichloe festucae (strain E2368)).